Consider the following 477-residue polypeptide: Tryptophan biosynthesis protein TrpCF (477 aa).

An indole-3-glycerol phosphate synthase region spans residues 13–275; that stretch reads SATVLQKIVL…NAVRSVIFGE (263 aa). The interval 276 to 477 is N-(5'-phosphoribosyl)anthranilate isomerase; the sequence is NKVCGLTRAQ…KVRLVFNNIY (202 aa).

This sequence in the N-terminal section; belongs to the TrpC family. In the C-terminal section; belongs to the TrpF family. In terms of assembly, monomer.

It carries out the reaction N-(5-phospho-beta-D-ribosyl)anthranilate = 1-(2-carboxyphenylamino)-1-deoxy-D-ribulose 5-phosphate. The catalysed reaction is 1-(2-carboxyphenylamino)-1-deoxy-D-ribulose 5-phosphate + H(+) = (1S,2R)-1-C-(indol-3-yl)glycerol 3-phosphate + CO2 + H2O. The protein operates within amino-acid biosynthesis; L-tryptophan biosynthesis; L-tryptophan from chorismate: step 3/5. It participates in amino-acid biosynthesis; L-tryptophan biosynthesis; L-tryptophan from chorismate: step 4/5. Its function is as follows. Bifunctional enzyme that catalyzes two sequential steps of tryptophan biosynthetic pathway. The first reaction is catalyzed by the isomerase, coded by the TrpF domain; the second reaction is catalyzed by the synthase, coded by the TrpC domain. In Haemophilus influenzae (strain ATCC 51907 / DSM 11121 / KW20 / Rd), this protein is Tryptophan biosynthesis protein TrpCF (trpC).